Here is a 67-residue protein sequence, read N- to C-terminus: uncharacterized protein (67 aa).

A run of 2 helical transmembrane segments spans residues Glu10–Trp30 and Leu40–Phe60.

The protein belongs to the plectrovirus ORF10 family.

It is found in the host membrane. This is an uncharacterized protein from Spiroplasma citri (SpV1).